Here is a 460-residue protein sequence, read N- to C-terminus: tRNA modification GTPase MnmE (460 aa).

The (6S)-5-formyl-5,6,7,8-tetrahydrofolate site is built by Arg-29, Glu-89, and Arg-128. One can recognise a TrmE-type G domain in the interval 224–382 (GVPTVIIGKP…LKQNLLEIIQ (159 aa)). Asn-234 is a binding site for K(+). Residues 234–239 (NAGKST), 253–259 (SEIAGTT), and 278–281 (DTAG) each bind GTP. Ser-238 is a Mg(2+) binding site. Residues Ser-253, Ile-255, and Thr-258 each coordinate K(+). Thr-259 is a Mg(2+) binding site. Lys-460 is a binding site for (6S)-5-formyl-5,6,7,8-tetrahydrofolate.

This sequence belongs to the TRAFAC class TrmE-Era-EngA-EngB-Septin-like GTPase superfamily. TrmE GTPase family. Homodimer. Heterotetramer of two MnmE and two MnmG subunits. The cofactor is K(+).

The protein resides in the cytoplasm. Exhibits a very high intrinsic GTPase hydrolysis rate. Involved in the addition of a carboxymethylaminomethyl (cmnm) group at the wobble position (U34) of certain tRNAs, forming tRNA-cmnm(5)s(2)U34. This Cytophaga hutchinsonii (strain ATCC 33406 / DSM 1761 / CIP 103989 / NBRC 15051 / NCIMB 9469 / D465) protein is tRNA modification GTPase MnmE.